The following is a 56-amino-acid chain: Venom peptide 5 (56 aa).

The first 26 residues, 1-26, serve as a signal peptide directing secretion; sequence MKTASFILSFVVLLIVIITWIGEVSA. The propeptide occupies 27–42; sequence VSEPEPVAKATAHAAA. Cysteines 49 and 54 form a disulfide.

Probably contains 1 disulfide bond, which may be crucial for activity, since the linear peptide without disulfide bond is inactive. As to expression, expressed by the venom gland.

It localises to the secreted. In Eumenes pomiformis (Potter wasp), this protein is Venom peptide 5.